The primary structure comprises 834 residues: DIS3-like exonuclease 2 (834 aa).

Polar residues predominate over residues 1-23 (MHNSEFLSPVQSGTQRGTNRSIL). The segment at 1–35 (MHNSEFLSPVQSGTQRGTNRSILNNKKSGKGKKKS) is disordered. Positions 354 and 363 each coordinate Mg(2+).

The protein belongs to the RNR ribonuclease family. DIS3L2 subfamily. It depends on Mg(2+) as a cofactor. The cofactor is Mn(2+).

It localises to the cytoplasm. Its subcellular location is the P-body. 3'-5'-exoribonuclease that specifically recognizes RNAs polyuridylated at their 3' end and mediates their degradation. Component of an exosome-independent RNA degradation pathway that mediates degradation of both mRNAs and miRNAs that have been polyuridylated by a terminal uridylyltransferase. Essential for correct mitosis, and negatively regulates cell proliferation. The protein is DIS3-like exonuclease 2 of Xenopus tropicalis (Western clawed frog).